The primary structure comprises 567 residues: Malate synthase, glyoxysomal (567 aa).

The active-site Proton acceptor is Arg182. Asp468 acts as the Proton donor in catalysis. The short motif at 565-567 (SRL) is the Microbody targeting signal element.

It belongs to the malate synthase family.

The protein resides in the glyoxysome. It carries out the reaction glyoxylate + acetyl-CoA + H2O = (S)-malate + CoA + H(+). The protein operates within carbohydrate metabolism; glyoxylate cycle; (S)-malate from isocitrate: step 2/2. In Ricinus communis (Castor bean), this protein is Malate synthase, glyoxysomal.